The sequence spans 116 residues: Flagellar transcriptional regulator FlhD (116 aa).

The protein belongs to the FlhD family. Homodimer; disulfide-linked. Forms a heterohexamer composed of two FlhC and four FlhD subunits. Each FlhC binds a FlhD dimer, forming a heterotrimer, and a hexamer assembles by dimerization of two heterotrimers.

The protein localises to the cytoplasm. Functionally, functions in complex with FlhC as a master transcriptional regulator that regulates transcription of several flagellar and non-flagellar operons by binding to their promoter region. Activates expression of class 2 flagellar genes, including fliA, which is a flagellum-specific sigma factor that turns on the class 3 genes. Also regulates genes whose products function in a variety of physiological pathways. The sequence is that of Flagellar transcriptional regulator FlhD from Xenorhabdus nematophila (Achromobacter nematophilus).